The following is a 118-amino-acid chain: BolA-like protein 3 (118 aa).

The protein belongs to the BolA/IbaG family. As to quaternary structure, interacts with NFU1.

Its subcellular location is the mitochondrion matrix. Acts as a mitochondrial iron-sulfur (Fe-S) cluster assembly factor that facilitates [4Fe-4S] cluster insertion into a subset of mitochondrial proteins such as lipoyl synthase (LS) and succinate dehydrogenase (SDH). Required during the last step of iron-sulfur protein assembly when the iron-sulfur cluster is inserted into the target protein. Acts together with NFU1, later than BOL1 and GRX5 in the [4Fe-4S] cluster insertion process. Not required for [2Fe-2S] cluster insertion into mitochondrial proteins. The protein is BolA-like protein 3 of Saccharomyces cerevisiae (strain ATCC 204508 / S288c) (Baker's yeast).